Consider the following 461-residue polypeptide: Putative 2,3-dihydroxypropane-1-sulfonate exporter (461 aa).

The Cytoplasmic portion of the chain corresponds to 1–20 (MSHITTEDPATLRLPFKEKL). A helical transmembrane segment spans residues 21–41 (SYGIGDLASNILLDIGTLYLL). Residues 42–47 (KFYTDV) lie on the Periplasmic side of the membrane. Residues 48–68 (LGLPGTYGGIIFLISKFFTAF) form a helical membrane-spanning segment. The Cytoplasmic segment spans residues 69–92 (TDMGTGIMLDSRRKIGPKGKFRPF). The helical transmembrane segment at 93–113 (ILYASFPVTLLAIANFVGTPF) threads the bilayer. The Periplasmic portion of the chain corresponds to 114–123 (DVTGKTVMAT). A helical membrane pass occupies residues 124–144 (ILFMLYGLFFSMMNCSYGAMV). The Cytoplasmic portion of the chain corresponds to 145-162 (PAITKNPNERASLAAWRQ). A helical membrane pass occupies residues 163 to 183 (GGATLGLLLCTVGFVPVMNLI). Residues 184–188 (EGNQQ) lie on the Periplasmic side of the membrane. Residues 189 to 209 (LGYIFAATLFSLFGLLFMWIC) form a helical membrane-spanning segment. Residues 210–243 (YSGVKERYVETQPANPAQKPGLLQSFRAIAGNRP) lie on the Cytoplasmic side of the membrane. The helical transmembrane segment at 244 to 264 (LFILCIANLCTLGAFNVKLAI) threads the bilayer. The Periplasmic segment spans residues 265 to 276 (QVYYTQYVLNDP). A helical membrane pass occupies residues 277 to 297 (ILLSYMGFFSMGCIFIGVFLM). Topologically, residues 298 to 308 (PASVRRFGKKK) are cytoplasmic. Residues 309-329 (VYIGGLLIWVLGDLLNYFFGG) form a helical membrane-spanning segment. Position 330 (Gly-330) is a topological domain, periplasmic. The chain crosses the membrane as a helical span at residues 331-351 (SVSFVAFSCLAFFGSAFVNSL). At 352–387 (NWALVSDTVEYGEWRTGVRSEGTVYTGFTFFRKVSQ) the chain is on the cytoplasmic side. Residues 388–408 (ALAGFFPGWMLTQIGYVPNVA) form a helical membrane-spanning segment. At 409–419 (QADHTIEGLRQ) the chain is on the periplasmic side. A helical transmembrane segment spans residues 420–440 (LIFIYPSALAVVTIVAMGCFY). Topologically, residues 441-461 (SLNEKMYVRIVEEIEARKRTA) are cytoplasmic.

The protein belongs to the sodium:galactoside symporter (TC 2.A.2) family.

Its subcellular location is the cell inner membrane. Could be involved in the export of 2,3-dihydroxypropane-1-sulfonate (DHPS). This chain is Putative 2,3-dihydroxypropane-1-sulfonate exporter (yihP), found in Escherichia coli (strain K12).